Consider the following 432-residue polypeptide: Enolase (432 aa).

Residue Q163 coordinates (2R)-2-phosphoglycerate. Residue E205 is the Proton donor of the active site. Mg(2+)-binding residues include D242, E285, and D312. (2R)-2-phosphoglycerate contacts are provided by K337, R366, S367, and K388. The Proton acceptor role is filled by K337.

Belongs to the enolase family. The cofactor is Mg(2+).

The protein localises to the cytoplasm. The protein resides in the secreted. Its subcellular location is the cell surface. The enzyme catalyses (2R)-2-phosphoglycerate = phosphoenolpyruvate + H2O. Its pathway is carbohydrate degradation; glycolysis; pyruvate from D-glyceraldehyde 3-phosphate: step 4/5. In terms of biological role, catalyzes the reversible conversion of 2-phosphoglycerate (2-PG) into phosphoenolpyruvate (PEP). It is essential for the degradation of carbohydrates via glycolysis. The protein is Enolase of Bifidobacterium adolescentis (strain ATCC 15703 / DSM 20083 / NCTC 11814 / E194a).